Here is a 550-residue protein sequence, read N- to C-terminus: Transcription factor 7-like 1-C (550 aa).

A compositionally biased stretch (gly residues) spans 1 to 11 (MPQLNSGGGDE). The interaction with CTNNB1-A stretch occupies residues 1 to 60 (MPQLNSGGGDELGANDELIRFKDEGEQEEKSPGEGSAEDLADVKSSLVNESENHSSDSDS). 3 disordered regions span residues 1-76 (MPQL…EKPR), 182-206 (GTPP…HPSE), and 390-473 (WSAR…SLTT). Composition is skewed to basic and acidic residues over residues 17–32 (ELIR…EKSP) and 51–76 (SENH…EKPR). The tract at residues 108–311 (LGGITCPMVP…SPNLSRKSNV (204 aa)) is interaction with AES and TLE4-A. The segment at residues 323 to 391 (IKKPLNAFML…LHSQLYPSWS (69 aa)) is a DNA-binding region (HMG box). The span at 406 to 415 (KQSPEMENYT) shows a compositional bias: basic and acidic residues. The segment at 407–550 (QSPEMENYTK…PLSLVTRSSD (144 aa)) is interaction with CTBP-B. The span at 444-463 (SPATPSAALASPAAPAATHS) shows a compositional bias: low complexity. Over residues 464–473 (EQAQPLSLTT) the composition is skewed to polar residues.

This sequence belongs to the TCF/LEF family. In terms of assembly, interacts with csnk1e, ctnnb1-A, ctbp-B, dact1-A and gsk3b. May interact with ase and tle4-A. Post-translationally, phosphorylated. Phosphorylation by csnk1e promotes binding to ctnnb1-A while phosphorylation by gsk3b may reverse this effect.

The protein localises to the nucleus. In terms of biological role, participates in the Wnt signaling pathway. Binds to DNA and acts as a repressor in the absence of ctnnb1-A and possibly ctnnb1-B, and as an activator in the presence of these proteins. Required early in development for the establishment of the dorsal body axis in response to maternal Wnt signaling. This is Transcription factor 7-like 1-C (tcf7l1-c) from Xenopus laevis (African clawed frog).